Consider the following 441-residue polypeptide: Ribosomal protein uS12 methylthiotransferase RimO (441 aa).

The MTTase N-terminal domain occupies 7-117; the sequence is PKISFVSLGC…VLEAVHRARP (111 aa). Positions 16, 52, 81, 148, 152, and 155 each coordinate [4Fe-4S] cluster. A Radical SAM core domain is found at 134–371; the sequence is LTPRHYAYLK…MARQQAISAR (238 aa). In terms of domain architecture, TRAM spans 374–440; it reads KRKVGTRQQV…AYDLHGTVAG (67 aa).

Belongs to the methylthiotransferase family. RimO subfamily. The cofactor is [4Fe-4S] cluster.

It is found in the cytoplasm. It catalyses the reaction L-aspartate(89)-[ribosomal protein uS12]-hydrogen + (sulfur carrier)-SH + AH2 + 2 S-adenosyl-L-methionine = 3-methylsulfanyl-L-aspartate(89)-[ribosomal protein uS12]-hydrogen + (sulfur carrier)-H + 5'-deoxyadenosine + L-methionine + A + S-adenosyl-L-homocysteine + 2 H(+). Functionally, catalyzes the methylthiolation of an aspartic acid residue of ribosomal protein uS12. The protein is Ribosomal protein uS12 methylthiotransferase RimO of Rhodopseudomonas palustris (strain ATCC BAA-98 / CGA009).